A 169-amino-acid polypeptide reads, in one-letter code: Putative cysteine protease YraA (169 aa).

Positions K3–K169 constitute a PfpI endopeptidase domain. C103 acts as the Nucleophile in catalysis. The active site involves H104.

Belongs to the peptidase C56 family.

In terms of biological role, functions in the protection against aldehyde-stress, possibly by degrading damaged proteins. This is Putative cysteine protease YraA (yraA) from Bacillus subtilis (strain 168).